Reading from the N-terminus, the 809-residue chain is MQFPESWLRSFVNPPIATAELSHRLTMAGLEVEEVDPVAPPFSQIVVGHVVEVNKHPDADRLNVCKVDAGTGELLQIVCGAPNVSVGIKVPCALVGAELPPGDDGKPFKIKIGKLRGVESYGMLCSARELKLSEEHGGLLILPEDTPVGADIRKVLDLDDQIFIIKLTPNKADCLSIHGVAREVSALTGAPITLPTMAPVAVTLSDKLPVKVEAPDLCGRFAGRIIRGVNARAKTPAWMVSRIERAGMRSVSALVDISNYVMLELGRPSHVFDLDKIHGGLTVRWGKPGEQLKLLNGDTVTVDDKVGVISDEQAIESLAGIMGGDKTAVTLDTQNIYVEAAFWWPAAIQGRARRYNFSTDAGHRFERGVDYATIVEHIERISALILDICGGQAGPIDDQIVNCPKREPVRMRVARAARVLGIPLSHEVVSDVFKRLGLTFSVDGDVFVVEPPSYRFDIEIEEDLIEEVARIYGFEQIPAKPPVAENAMRPTNEARRTMHDVRHAVAARDYHEVVNFAFVETEWEADFAGNTQPIPLLNPIASQYSVMRSTLIGGLLDKVRYNLNRKASRVRLFEVGRVFRRDAEVADGGLSVAGYAQPMRVGGIAYGPAAEEQWGVPARAVDFFDVKGDVESLLWPLQARFERAEHSALHPGRAARVVLDGRAVGWIGELHPRWLQKYELPTAPVVWELDLDAITAVGLPAYREVPRVPAVTRDIALVVRQDVGVQDLVDAFEKAAAGMPWQRYLQGVVLFDEFRPKAATAAIGAQEKSLAFRITLQDTDSTLQDDLVEAATQQLIRAAGDAFGARLRA.

The tRNA-binding domain maps to 39–153 (APPFSQIVVG…EDTPVGADIR (115 aa)). In terms of domain architecture, B5 spans 404 to 479 (PKREPVRMRV…RIYGFEQIPA (76 aa)). Asp-457, Asp-463, Glu-466, and Glu-467 together coordinate Mg(2+). An FDX-ACB domain is found at 706–808 (PRVPAVTRDI…AGDAFGARLR (103 aa)).

The protein belongs to the phenylalanyl-tRNA synthetase beta subunit family. Type 1 subfamily. In terms of assembly, tetramer of two alpha and two beta subunits. Mg(2+) is required as a cofactor.

The protein resides in the cytoplasm. It catalyses the reaction tRNA(Phe) + L-phenylalanine + ATP = L-phenylalanyl-tRNA(Phe) + AMP + diphosphate + H(+). In Ralstonia nicotianae (strain ATCC BAA-1114 / GMI1000) (Ralstonia solanacearum), this protein is Phenylalanine--tRNA ligase beta subunit.